The chain runs to 179 residues: Large ribosomal subunit protein uL6 (179 aa).

It belongs to the universal ribosomal protein uL6 family. As to quaternary structure, part of the 50S ribosomal subunit.

This protein binds to the 23S rRNA, and is important in its secondary structure. It is located near the subunit interface in the base of the L7/L12 stalk, and near the tRNA binding site of the peptidyltransferase center. The polypeptide is Large ribosomal subunit protein uL6 (Chlorobium luteolum (strain DSM 273 / BCRC 81028 / 2530) (Pelodictyon luteolum)).